The primary structure comprises 216 residues: NKG2-D type II integral membrane protein (216 aa).

At 1-51 the chain is on the cytoplasmic side; sequence MGWIRGRRPRHNLEMSEFHNYKLGLAKSDFSTRCQKQRCPVIKSKCRENAS. Residues 52 to 72 traverse the membrane as a helical; Signal-anchor for type II membrane protein segment; sequence PLFFCCFIAVAMGIRFIIMVT. Residues 73-216 are Extracellular-facing; that stretch reads IWSAVFLNSL…NTYICMQRTV (144 aa). 2 disulfide bridges follow: Cys-96-Cys-105 and Cys-99-Cys-110. The region spanning 98 to 213 is the C-type lectin domain; sequence PCPKNWICYK…SIPNTYICMQ (116 aa). N-linked (GlcNAc...) asparagine glycosylation is found at Asn-115, Asn-131, Asn-163, and Asn-202. 2 disulfide bridges follow: Cys-127–Cys-211 and Cys-189–Cys-203.

As to quaternary structure, homodimer; disulfide-linked. Heterohexamer composed of two subunits of KLRK1 and four subunits of HCST/DAP10. Interacts (via transmembrane domain) with HCST/DAP10 (via transmembrane domain); the interaction is required for KLRK1 NK cell surface and induces NK cell-mediated cytotoxicity. Can form disulfide-bonded heterodimer with CD94. Interacts with CEACAM1; recruits PTPN6 that dephosphorylates VAV1. As to expression, natural killer cells.

The protein localises to the cell membrane. Functionally, functions as an activating and costimulatory receptor involved in immunosurveillance upon binding to various cellular stress-inducible ligands displayed at the surface of autologous tumor cells and virus-infected cells. Provides both stimulatory and costimulatory innate immune responses on activated killer (NK) cells, leading to cytotoxic activity. Acts as a costimulatory receptor for T-cell receptor (TCR) in CD8(+) T-cell-mediated adaptive immune responses by amplifying T-cell activation. Stimulates perforin-mediated elimination of ligand-expressing tumor cells. Signaling involves calcium influx, culminating in the expression of TNF-alpha. Participates in NK cell-mediated bone marrow graft rejection. May play a regulatory role in differentiation and survival of NK cells. Binds to ligands belonging to various subfamilies of MHC class I-related glycoproteins. The sequence is that of NKG2-D type II integral membrane protein (KLRK1) from Macaca fascicularis (Crab-eating macaque).